Consider the following 84-residue polypeptide: UPF0410 protein YmgE (84 aa).

The next 3 helical transmembrane spans lie at methionine 1–methionine 21, glycine 27–alanine 47, and glycine 58–phenylalanine 78.

The protein belongs to the UPF0410 family.

The protein resides in the cell inner membrane. The polypeptide is UPF0410 protein YmgE (ymgE) (Escherichia coli (strain K12)).